The chain runs to 238 residues: Segregation and condensation protein A (238 aa).

This sequence belongs to the ScpA family. As to quaternary structure, component of a cohesin-like complex composed of ScpA, ScpB and the Smc homodimer, in which ScpA and ScpB bind to the head domain of Smc. The presence of the three proteins is required for the association of the complex with DNA.

Its subcellular location is the cytoplasm. Participates in chromosomal partition during cell division. May act via the formation of a condensin-like complex containing Smc and ScpB that pull DNA away from mid-cell into both cell halves. In Macrococcus caseolyticus (strain JCSC5402) (Macrococcoides caseolyticum), this protein is Segregation and condensation protein A.